The sequence spans 284 residues: Protein Ku (284 aa).

The 180-residue stretch at 10-189 (TIGLVTVPVK…ELRSTEGIVP (180 aa)) folds into the Ku domain.

Homodimer. Interacts with host LigD.

Functionally, required for replication of viruses with short cos ends (4 bases). Stimulates dsDNA end-joining by host LigD. Binds dsDNA with either blunt, 5'- or 3-overhangs, protecting it from host exonuclease degradation. The chain is Protein Ku (87) from Mycobacterium phage Corndog (Mycobacteriophage Corndog).